The following is a 64-amino-acid chain: Large ribosomal subunit protein bL32 (64 aa).

Basic residues predominate over residues 1–16 (MAVQKSRKTRSRRGMR). Residues 1-64 (MAVQKSRKTR…TPKESYEDEE (64 aa)) are disordered.

It belongs to the bacterial ribosomal protein bL32 family.

This Coxiella burnetii (strain CbuK_Q154) (Coxiella burnetii (strain Q154)) protein is Large ribosomal subunit protein bL32.